The following is a 394-amino-acid chain: 8-amino-7-oxononanoate synthase (394 aa).

Residue R21 participates in substrate binding. 112–113 (GY) contacts pyridoxal 5'-phosphate. Substrate is bound at residue H137. S183, H211, and T239 together coordinate pyridoxal 5'-phosphate. An N6-(pyridoxal phosphate)lysine modification is found at K242. Position 358 (T358) interacts with substrate.

It belongs to the class-II pyridoxal-phosphate-dependent aminotransferase family. BioF subfamily. Homodimer. Pyridoxal 5'-phosphate serves as cofactor.

It catalyses the reaction 6-carboxyhexanoyl-[ACP] + L-alanine + H(+) = (8S)-8-amino-7-oxononanoate + holo-[ACP] + CO2. It functions in the pathway cofactor biosynthesis; biotin biosynthesis. Its function is as follows. Catalyzes the decarboxylative condensation of pimeloyl-[acyl-carrier protein] and L-alanine to produce 8-amino-7-oxononanoate (AON), [acyl-carrier protein], and carbon dioxide. In Burkholderia pseudomallei (strain 1710b), this protein is 8-amino-7-oxononanoate synthase.